The chain runs to 222 residues: Translation initiation factor 6 (222 aa).

It belongs to the eIF-6 family.

In terms of biological role, binds to the 50S ribosomal subunit and prevents its association with the 30S ribosomal subunit to form the 70S initiation complex. The protein is Translation initiation factor 6 of Methanothermobacter thermautotrophicus (strain ATCC 29096 / DSM 1053 / JCM 10044 / NBRC 100330 / Delta H) (Methanobacterium thermoautotrophicum).